The following is a 293-amino-acid chain: Ribosomal protein L11 methyltransferase (293 aa).

S-adenosyl-L-methionine-binding residues include Thr-145, Gly-166, Asp-188, and Asn-230.

It belongs to the methyltransferase superfamily. PrmA family.

It is found in the cytoplasm. The enzyme catalyses L-lysyl-[protein] + 3 S-adenosyl-L-methionine = N(6),N(6),N(6)-trimethyl-L-lysyl-[protein] + 3 S-adenosyl-L-homocysteine + 3 H(+). Functionally, methylates ribosomal protein L11. This chain is Ribosomal protein L11 methyltransferase, found in Actinobacillus pleuropneumoniae serotype 3 (strain JL03).